The following is a 522-amino-acid chain: Maturase K (522 aa).

Belongs to the intron maturase 2 family. MatK subfamily.

The protein resides in the plastid. The protein localises to the chloroplast. Its function is as follows. Usually encoded in the trnK tRNA gene intron. Probably assists in splicing its own and other chloroplast group II introns. In Sapindus saponaria (Soapberry), this protein is Maturase K.